Consider the following 445-residue polypeptide: Acyl-lipid (7-3)-desaturase (445 aa).

Residues valine 11–aspartate 91 form the Cytochrome b5 heme-binding domain. Positions 50 and 73 each coordinate heme. Transmembrane regions (helical) follow at residues tyrosine 126 to leucine 146 and glycine 148 to isoleucine 168. The Histidine box-1 signature appears at histidine 170–histidine 174. The short motif at histidine 205–histidine 210 is the Histidine box-2 element. A run of 3 helical transmembrane segments spans residues isoleucine 247–leucine 267, leucine 283–leucine 303, and alanine 312–isoleucine 332. The Histidine box-3 motif lies at glutamine 380–histidine 384.

It belongs to the fatty acid desaturase type 1 family. Requires Fe(2+) as cofactor.

The protein localises to the membrane. It carries out the reaction a (7Z,10Z,13Z,16Z,19Z)-docosapentaenoyl-containing glycerolipid + 2 Fe(II)-[cytochrome b5] + O2 + 2 H(+) = a (4Z,7Z,10Z,13Z,16Z,19Z)-docosahexaenoyl-containing glycerolipid + 2 Fe(III)-[cytochrome b5] + 2 H2O. The enzyme catalyses a (7Z,10Z,13Z,16Z)-docosatetraenoyl-containing glycerolipid + 2 Fe(II)-[cytochrome b5] + O2 + 2 H(+) = a (4Z,7Z,10Z,13Z,16Z)-docosapentaenoyl-containing glycerolipid + 2 Fe(III)-[cytochrome b5] + 2 H2O. Fatty acid desaturase that introduces a cis double bond at the 4-position in 22-carbon polyunsaturated fatty acids that contain a Delta(7) double bond, resulting in the production of delta-4 desaturated fatty acid docosahexanoic acid (DHA). Mediates desaturation of 22:5n-3 and 22:4n-6 into 22:6n-3 and 22:5n-6 respectively. The chain is Acyl-lipid (7-3)-desaturase from Diacronema lutheri (Unicellular marine alga).